Consider the following 694-residue polypeptide: MAAAGPSTRASSAAAAAALSRRGRRGRCDEMAAAKAGAPGPASSPALLVLRSAPRPEESGCTGCLETPGEVAALPCSHSRCRGCASRAAGPGCRRCRPRGSGWARRRARDDGQAAAELMGERARRGQPEPCRPRRDGGAAASGPRPEPEPLAEPEFIFRTPIKLSKPGELSEEYGCLRKLRGEKLQEEKDCDDQIHKLLQEDSEMGKRKADEQKKRDEAVVLKTSLEQCPARLSDSENEEPSRGQMMQTHRSAFVSKNSSCSLAFLAGKLNTKVQRSQSCSDTVQDRVRSRLRTAPPNRAKITTITPGSTPIIGVLLSTQNNRCLSAPDLTIEKRLPFGSLSSLASLHKPERSISPESNDSISEELNHFKPIVCSPCTPPKRLPDGRVLSPLIIKSTPRNLTRSLQKQTSYEASPRILKKWEQIFQERQIKKTLSKATLTSLAPEAGEEFPGSDTIHSSKERPSLAFNTRLSRVQVLSECAGPTSTALECFPSVNQTKVEQDCVRKRSREFSLETCHSSEHGGASSGPSLEREQCEESGSTVDATLVKTCISTVMKTAAVNSLLPKNDVLGGVLKTKQQLKTLNHFDLGNGILVNSLGEEPIPSLRRGRKRRCKTKHLEQNGVKKLRPPSSDMDLAPKDPGLLEVGRKLQQEEEDQQLALQSHRMFDSERRTMSRRKGSVDQYLLRSSSLAGAK.

Composition is skewed to low complexity over residues M1–S20 and A33–A46. Positions M1–A46 are disordered. S12 is subject to Phosphoserine. The RING-type zinc finger occupies C61–R97. The segment at G100–E153 is disordered. The segment covering M119–G137 has biased composition (basic and acidic residues). A UMI motif motif is present at residues D192–Q200. Phosphoserine is present on residues S234 and S236. Residue K273 forms a Glycyl lysine isopeptide (Lys-Gly) (interchain with G-Cter in SUMO2) linkage. S326 is modified (phosphoserine). K349 participates in a covalent cross-link: Glycyl lysine isopeptide (Lys-Gly) (interchain with G-Cter in SUMO2). Phosphoserine occurs at positions 390 and 396. At T397 the chain carries Phosphothreonine. S472 is modified (phosphoserine). Residue K498 forms a Glycyl lysine isopeptide (Lys-Gly) (interchain with G-Cter in SUMO2) linkage. The tract at residues T515 to E537 is disordered. Position 541 is a phosphothreonine (T541). A Phosphoserine modification is found at S630. The short motif at Q651–S668 is the MIU motif element. The LR motif motif lies at R675–S687. Position 679 is a phosphoserine (S679).

This sequence belongs to the RNF169 family. Interacts with DYRK1B. In terms of processing, phosphorylated by DYRK1A; phosphorylation increases RNF169 ability to block accumulation of TP53BP1 at the DSB sites.

The protein localises to the chromosome. The protein resides in the nucleus. It is found in the nucleoplasm. The catalysed reaction is S-ubiquitinyl-[E2 ubiquitin-conjugating enzyme]-L-cysteine + [acceptor protein]-L-lysine = [E2 ubiquitin-conjugating enzyme]-L-cysteine + N(6)-ubiquitinyl-[acceptor protein]-L-lysine.. It participates in protein modification; protein ubiquitination. In terms of biological role, probable E3 ubiquitin-protein ligase that acts as a regulator of double-strand breaks (DSBs) repair following DNA damage. Functions in a non-canonical fashion to harness RNF168-mediated protein recruitment to DSB-containing chromatin, thereby contributing to regulation of DSB repair pathway utilization. Once recruited to DSB repair sites by recognizing and binding ubiquitin catalyzed by RNF168, competes with TP53BP1 and BRCA1 for association with RNF168-modified chromatin, thereby favouring homologous recombination repair (HRR) and single-strand annealing (SSA) instead of non-homologous end joining (NHEJ) mediated by TP53BP1. E3 ubiquitin-protein ligase activity is not required for regulation of DSBs repair. The sequence is that of E3 ubiquitin-protein ligase RNF169 (Rnf169) from Mus musculus (Mouse).